The following is a 229-amino-acid chain: Uracil-DNA glycosylase (229 aa).

Asp64 acts as the Proton acceptor in catalysis.

This sequence belongs to the uracil-DNA glycosylase (UDG) superfamily. UNG family.

It is found in the cytoplasm. It catalyses the reaction Hydrolyzes single-stranded DNA or mismatched double-stranded DNA and polynucleotides, releasing free uracil.. Excises uracil residues from the DNA which can arise as a result of misincorporation of dUMP residues by DNA polymerase or due to deamination of cytosine. The protein is Uracil-DNA glycosylase of Klebsiella pneumoniae subsp. pneumoniae (strain ATCC 700721 / MGH 78578).